A 945-amino-acid chain; its full sequence is Poly [ADP-ribose] polymerase 1 (945 aa).

A PARP-type 1 zinc finger spans residues 10 to 96 (YAIEYAKSGR…KLRQEIQHFK (87 aa)). Positions 22, 25, 54, and 57 each coordinate Zn(2+). The segment at 117 to 183 (IKTEKSLSNR…DYEENFKIKA (67 aa)) adopts a PARP-type 2; degenerate zinc-finger fold. The tract at residues 195–251 (RRSTEPATPASASPTPPEAETPVLSAEGSPESSNKRPASSEIIEIDGEGNPDENDFA) is disordered. The segment covering 237–248 (IEIDGEGNPDEN) has biased composition (acidic residues). The region spanning 258 to 397 (KEARLMEVQK…NQMSERLYIG (140 aa)) is the PADR1 zinc-binding domain. Residues 324–369 (GCPIICQTCSNGKIVYNSSCRTYVCTGYATEYSKCTYESKNPIRTP) form a zinc ribbon region. Residues C329, C332, C348, and C358 each coordinate Zn(2+). Positions 464–563 (RCHVFKNEID…KHFRKMPGMF (100 aa)) constitute a WGR domain. A PARP alpha-helical domain is found at 586–704 (KTLLPKSVKE…DIKFAYDQIS (119 aa)). The PARP catalytic domain occupies 717 to 945 (DPVDINYQKL…RVKMHHARHL (229 aa)).

It belongs to the ARTD/PARP family.

The protein resides in the nucleus. It carries out the reaction NAD(+) + (ADP-D-ribosyl)n-acceptor = nicotinamide + (ADP-D-ribosyl)n+1-acceptor + H(+).. It catalyses the reaction L-aspartyl-[protein] + NAD(+) = 4-O-(ADP-D-ribosyl)-L-aspartyl-[protein] + nicotinamide. The enzyme catalyses L-glutamyl-[protein] + NAD(+) = 5-O-(ADP-D-ribosyl)-L-glutamyl-[protein] + nicotinamide. Inhibited by N-(6-oxo-5,6-dihydrophenanthridin-2-yl)-N,N-dimethylacetamide HCl (PJ34), 1,5-dihydroxyisoquinoline (DHQ) and 3-aminobenzamide (3AB). Functionally, poly[ADP-ribose] polymerase modifies various nuclear proteins by poly(ADP-ribosyl)ation, a post-translational modification synthesized after DNA damage that appears as an obligatory step in a detection/signaling pathway leading to the reparation of DNA strand breaks and programmed cell death. Involved in protection of the genome against mutations. In Caenorhabditis elegans, this protein is Poly [ADP-ribose] polymerase 1.